The primary structure comprises 639 residues: MSTIRLTTAQALVKFLNNQYVEFDGKQQRFVKGIFTIFGHGNVLGLGQALEEDPGELEVYQGRNEQGMANAAIAFAKQKNRKQIMAATSSVGPGAANMVTSAATATANNIPVLLLPGDVFATRQPDPVLQQIEHTHDLSISTNDAFRAVSKYWDRVCRPEQLMSAMLNAMRVLTNPADTGAVTIALPQDVQGEAWDFPESFFAKRVHRIERRQPSLESVRDAVKLIRSKKKPLLVLGGGVRYSEAADAFVKFAEKFNIPFAETQAGKGTIESSHPLNLGGIGVTGNLAANTIAKQADLIIGVGTRFTDFTTASKQLFSSAEILTINVSEFHASKLDAVKVVADAKAGLEAIAEALGDYVSAYGNEISEAKQAWNRELERLCSVAYGENFTPEIAGHLDEKLPEYREAFGSELTQTGVIGKVNELIDDDAVIVGASGSLPGDLQRMWVCKDRNTYHMEYGYSCMGYEIAGAFGVKLAEPDKEVYAMVGDGSFLMLHSELVTSLQEGQKINIILFDNSGFGCINNLQMENGMGSFVTEFRKRNLETGQLDGPIMTIDYAKVAEGYGLKTYSVRTMEELETALIDSKKQSISTLIDIKVLPKTMTHGYGSWWHVGVAEVSTKESVQAAYRNKQENLKLARKY.

Glu-65 provides a ligand contact to thiamine diphosphate. The tract at residues 437 to 517 is thiamine pyrophosphate binding; sequence SLPGDLQRMW…INIILFDNSG (81 aa). Mg(2+)-binding residues include Asp-488 and Asn-515.

The protein belongs to the TPP enzyme family. Mg(2+) is required as a cofactor. Thiamine diphosphate serves as cofactor.

The catalysed reaction is 3D-3,5/4-trihydroxycyclohexane-1,2-dione + H2O = 5-deoxy-D-glucuronate + H(+). It participates in polyol metabolism; myo-inositol degradation into acetyl-CoA; acetyl-CoA from myo-inositol: step 3/7. In terms of biological role, involved in the cleavage of the C1-C2 bond of 3D-(3,5/4)-trihydroxycyclohexane-1,2-dione (THcHDO) to yield 5-deoxy-glucuronate (5DG). This is 3D-(3,5/4)-trihydroxycyclohexane-1,2-dione hydrolase from Geobacillus thermodenitrificans (strain NG80-2).